The primary structure comprises 390 residues: Probable inactive secreted aspartyl protease (390 aa).

Residues 1 to 20 form the signal peptide; sequence MQLTIKALVGILTTISAATA. A propeptide spans 21–69 (removed in mature form); the sequence is VSFDMENLGAEKRGVSGEELHMLHGNEVLARFANGVYPEVANGTRVSKR. Asn62 carries an N-linked (GlcNAc...) asparagine glycan. The region spanning 86 to 388 is the Peptidase A1 domain; it reads WAVKAKIGSN…KFDSNEMQIA (303 aa). Residues Asp104 and Asp273 contribute to the active site. Cysteines 313 and 346 form a disulfide.

Belongs to the peptidase A1 family.

The protein localises to the secreted. Its function is as follows. Probable inactive secreted aspartyl protease. May promote an inflammatory immune response in the host when the host skin barrier is breached. Has no detectable protease activity in vitro on fluorogenic substrates, a peptide library, or with the general protease substrate casein. The presence of the enzyme also does not affect the activity of the secreted aspartyl protease SAP1. The polypeptide is Probable inactive secreted aspartyl protease (Malassezia globosa (strain ATCC MYA-4612 / CBS 7966) (Dandruff-associated fungus)).